The chain runs to 729 residues: MSKMRFFALQELSNRKPLEITTPSNKLSDYYASHVFDRKKMQEYLPKEAYKAVVDATEKGTPISREMADLIANGMKSWAKSLNVTHYTHWFQPLTDGTAEKHDGFIEFGEDGEVIERFSGKLLIQQEPDASSFPNGGIRNTFEARGYTAWDVSSPAFVVDTTLCIPTIFISYTGEALDYKTPLLKALAAVDKAATEVCQLFDKNITRVFTNLGWEQEYFLVDTSLYNARPDLRLTGRTLMGHSSAKDQQLEDHYFGSIPPRVTAFMKELEIECHKLGIPVKTRHNEVAPNQFELAPIFENCNLANDHNQLVMDLMKRIARKHHFAVLFHEKPYNGVNGSGKHNNWSLCTDTGINLFAPGKNPKGNMLFLTFLVNVLMMVHKNQDLLRASIMSAGNSHRLGANEAPPAILSIFLGSQLSATLDEIVRQVTNSKMTPEEKTTLKLGIGRIPEILLDTTDRNRTSPFAFTGNRFEFRAAGSSANCAAAMIAINAAMANQLNEFKASVDKLMEEGIGKDEAIFRILKENIIASEPIRFEGDGYSEEWKQEAARRGLTNICHVPEALMHYTDNQSRAVLIGERIFNETELACRLEVELEKYTMKVQIESRVLGDLAINHIVPIAVSYQNRLLENLCRMKEIFSEEEYEVMSADRKELIKEISHRVSAIKVLVRDMTEARKVANHKENFKEKAFAYEETVRPYLESIRDHIDHLEMEIDDEIWPLPKYRELLFTK.

Residues 85-174 (THYTHWFQPL…IPTIFISYTG (90 aa)) form the GS beta-grasp domain. The region spanning 179–615 (YKTPLLKALA…VLGDLAINHI (437 aa)) is the GS catalytic domain. Mg(2+) contacts are provided by E215, E217, E286, and E293. L-glutamate contacts are provided by residues 337-338 (NG) and G338. H342 provides a ligand contact to Mg(2+). Positions 346 and 458 each coordinate ATP. R458 lines the L-glutamate pocket.

Belongs to the glutamine synthetase family. As to quaternary structure, homohexamer. The cofactor is Mg(2+).

The protein resides in the cytoplasm. The enzyme catalyses L-glutamate + NH4(+) + ATP = L-glutamine + ADP + phosphate + H(+). Inhibited by L-histidine (46%), L-arginine (38%) and L-methionine-DL-sulphoximine. The activity of this enzyme is not controlled by adenylation. Catalyzes the ATP-dependent biosynthesis of glutamine from glutamate and ammonia. The polypeptide is Glutamine synthetase (Bacteroides fragilis (strain YCH46)).